Reading from the N-terminus, the 350-residue chain is Nuclear pore complex-interacting protein family member A1 (350 aa).

Positions lysine 306 to aspartate 325 are disordered.

The protein belongs to the NPIP family. As to quaternary structure, may associate with the nuclear pore complex. As to expression, widely expressed.

The protein resides in the nucleus. The protein localises to the nuclear pore complex. Its subcellular location is the nucleus membrane. The sequence is that of Nuclear pore complex-interacting protein family member A1 (NPIPA1) from Homo sapiens (Human).